The following is a 105-amino-acid chain: MADTTRKSGSRRLARERIAVLFARAAEFYPESPDRSNRCVELARKIGMRHRIRIERPLKRRFCRRCYTYLVPGSNARVRVHRGRVVVTCLACGHRSRFPVGRPRQ.

Residues Cys-63, Cys-66, Cys-89, and Cys-92 each coordinate Zn(2+).

The protein belongs to the eukaryotic/archaeal RNase P protein component 4 family. Consists of a catalytic RNA component and at least 4-5 protein subunits. Zn(2+) serves as cofactor.

The protein resides in the cytoplasm. It catalyses the reaction Endonucleolytic cleavage of RNA, removing 5'-extranucleotides from tRNA precursor.. Its function is as follows. Part of ribonuclease P, a protein complex that generates mature tRNA molecules by cleaving their 5'-ends. The chain is Ribonuclease P protein component 4 from Methanoculleus marisnigri (strain ATCC 35101 / DSM 1498 / JR1).